A 208-amino-acid chain; its full sequence is Small ribosomal subunit protein uS4 (208 aa).

The 62-residue stretch at 98 to 159 (RRLDNVVYRL…KSRKIVSIND (62 aa)) folds into the S4 RNA-binding domain.

It belongs to the universal ribosomal protein uS4 family. In terms of assembly, part of the 30S ribosomal subunit. Contacts protein S5. The interaction surface between S4 and S5 is involved in control of translational fidelity.

Functionally, one of the primary rRNA binding proteins, it binds directly to 16S rRNA where it nucleates assembly of the body of the 30S subunit. Its function is as follows. With S5 and S12 plays an important role in translational accuracy. The polypeptide is Small ribosomal subunit protein uS4 (Pelobacter propionicus (strain DSM 2379 / NBRC 103807 / OttBd1)).